Here is a 668-residue protein sequence, read N- to C-terminus: tRNA 5-methylaminomethyl-2-thiouridine biosynthesis bifunctional protein MnmC (668 aa).

Residues 1-245 are tRNA (mnm(5)s(2)U34)-methyltransferase; the sequence is MKHYSIQPAN…KREMLCGVME (245 aa). An FAD-dependent cmnm(5)s(2)U34 oxidoreductase region spans residues 270-668; the sequence is IGGGIACALL…LLKGKAVKAG (399 aa).

It in the N-terminal section; belongs to the methyltransferase superfamily. tRNA (mnm(5)s(2)U34)-methyltransferase family. In the C-terminal section; belongs to the DAO family. It depends on FAD as a cofactor.

It is found in the cytoplasm. It carries out the reaction 5-aminomethyl-2-thiouridine(34) in tRNA + S-adenosyl-L-methionine = 5-methylaminomethyl-2-thiouridine(34) in tRNA + S-adenosyl-L-homocysteine + H(+). In terms of biological role, catalyzes the last two steps in the biosynthesis of 5-methylaminomethyl-2-thiouridine (mnm(5)s(2)U) at the wobble position (U34) in tRNA. Catalyzes the FAD-dependent demodification of cmnm(5)s(2)U34 to nm(5)s(2)U34, followed by the transfer of a methyl group from S-adenosyl-L-methionine to nm(5)s(2)U34, to form mnm(5)s(2)U34. This chain is tRNA 5-methylaminomethyl-2-thiouridine biosynthesis bifunctional protein MnmC, found in Shigella boydii serotype 18 (strain CDC 3083-94 / BS512).